Consider the following 3317-residue polypeptide: Cadherin-23 (3317 aa).

A signal peptide spans 1–23 (MRHPPVTWCAMLWLLMLVSGSWG). The Extracellular portion of the chain corresponds to 24–3062 (QVNRLPFFTN…SVQLPDDMSA (3039 aa)). Cadherin domains are found at residues 34-132 (HFFD…APTF), 133-236 (HNQP…DPIF), 237-348 (INLP…APEF), 349-458 (NSSE…RPIF), 459-559 (SQPL…VPTF), 560-669 (QKDA…PPTF), 670-782 (SKPA…APYY), 777-888 (KDAP…DPTF), 889-993 (QNLP…TPTF), 994-1100 (FPAV…RPIF), 1101-1206 (LQSS…APVF), 1208-1311 (QQQY…AVQF), 1312-1416 (SNAS…SPRF), 1418-1525 (FTSD…PPVI), 1527-1632 (SPFG…APVF), 1633-1742 (QQPH…VPTF), 1743-1849 (PRDY…DPVL), 1850-1957 (LNLP…HPLF), 1958-2067 (TEGT…WPTF), 2068-2172 (SPPA…RPEF), 2173-2291 (LNPI…TPQF), 2295-2400 (GITY…NPIF), 2401-2507 (DQLS…RPQF), 2508-2609 (SKPQ…RPVF), 2612-2720 (PPNG…EPLF), 2727-2844 (SPQY…PPRF), and 2845-2973 (TKAE…EEEF). N155 and N206 each carry an N-linked (GlcNAc...) asparagine glycan. N-linked (GlcNAc...) asparagine glycosylation is found at N349, N391, N432, N464, N470, N600, N692, N763, N808, N825, N939, N999, N1016, N1169, N1280, N1313, N1471, N1532, N1649, N1665, N1816, N1855, N1887, N1900, N2012, N2048, N2127, N2166, N2193, N2261, N2355, and N2367. 8 N-linked (GlcNAc...) asparagine glycosylation sites follow: N2576, N2614, N2747, N2806, N2875, N2894, N2939, and N2979. Residues 3063–3083 (LQMAIIVLAILLFLAAMLFVL) form a helical membrane-spanning segment. Topologically, residues 3084–3317 (MNWYYRTIHK…MESPLEITEL (234 aa)) are cytoplasmic.

As to quaternary structure, antiparallel heterodimer with PCDH15. Interacts with USH1C and USH1G.

Its subcellular location is the cell membrane. Its function is as follows. Cadherins are calcium-dependent cell adhesion proteins. They preferentially interact with themselves in a homophilic manner in connecting cells. CDH23 is required for establishing and/or maintaining the proper organization of the stereocilia bundle of hair cells in the cochlea and the vestibule during late embryonic/early postnatal development. It is part of the functional network formed by USH1C, USH1G, CDH23 and MYO7A that mediates mechanotransduction in cochlear hair cells. Required for normal hearing. The chain is Cadherin-23 (Cdh23) from Rattus norvegicus (Rat).